The sequence spans 1624 residues: Pappalysin-1 (1624 aa).

An N-terminal signal peptide occupies residues 1–22; that stretch reads MRLWSWVLRLGLLSAALGCGLA. The propeptide occupies 23–81; it reads ERPRRVRRDPRAVRPPRPAAGPATCATRAARGRRASPPPPPGGAWEAVRVPRRRQQRAA. Residues 28–93 form a disordered region; it reads VRRDPRAVRP…AEEPSPPSRA (66 aa). The segment covering 42-51 has biased composition (low complexity); it reads AGPATCATRA. Cystine bridges form between C141-C232, C324-C619, C329-C654, C411-C425, C421-C437, C454-C470, C471-C482, C580-C597, C584-C609, C707-C875, C710-C878, C750-C832, C772-C778, C944-C972, C957-C968, C980-C987, and C996-C1008. The tract at residues 272 to 583 is metalloprotease; that stretch reads RGLHTPLPQL…ISEIQSCSDP (312 aa). Residues N387 and N398 are each glycosylated (N-linked (GlcNAc...) asparagine). The N-linked (GlcNAc...) asparagine glycan is linked to N426. N516 is a glycosylation site (N-linked (GlcNAc...) asparagine). Zn(2+) is bound at residue H559. E560 is an active-site residue. Positions 563 and 569 each coordinate Zn(2+). N598, N616, and N722 each carry an N-linked (GlcNAc...) asparagine glycan. N-linked (GlcNAc...) asparagine glycosylation is present at N822. N1023 carries an N-linked (GlcNAc...) asparagine glycan. Intrachain disulfides connect C1033–C1067, C1048–C1136, C1189–C1202, C1212–C1266, C1224–C1235, C1239–C1277, C1282–C1326, C1297–C1307, C1311–C1339, C1343–C1396, C1359–C1370, C1374–C1407, C1412–C1455, C1425–C1435, C1439–C1468, C1475–C1536, C1489–C1499, C1503–C1551, and C1555–C1573. Sushi domains are found at residues 1210-1279, 1280-1341, 1342-1409, 1410-1470, and 1473-1553; these read ADCP…ACEP, VDCG…LCEL, MCLA…TCVP, VTCD…VCRE, and GQCS…HCVK. N-linked (GlcNAc...) asparagine glycans are attached at residues N1219 and N1223. Residue N1320 is glycosylated (N-linked (GlcNAc...) asparagine). A glycan (N-linked (GlcNAc...) asparagine) is linked at N1516.

It belongs to the peptidase M43B family. In terms of assembly, homodimer; disulfide-linked. In pregnancy serum, predominantly found as a disulfide-linked 2:2 heterotetramer with the proform of PRG2. It depends on Zn(2+) as a cofactor. Detected in kidney, spleen, brain, ovary, breast, skin, prostate, uterus, and placenta.

It is found in the secreted. The enzyme catalyses Cleavage of the 135-Met-|-Lys-136 bond in insulin-like growth factor binding protein (IGFBP)-4, and the 143-Ser-|-Lys-144 bond in IGFBP-5.. In terms of biological role, metalloproteinase which specifically cleaves IGFBP-4 and IGFBP-5, resulting in release of bound IGF. Cleavage of IGFBP-4 is dramatically enhanced by the presence of IGF, whereas cleavage of IGFBP-5 is slightly inhibited by the presence of IGF. Isoform 2 cleaves IGFBP-4 very slowly compared to PAPP-A, but its ability to cleave IGFBP-5 is unaffected. In Mus musculus (Mouse), this protein is Pappalysin-1 (Pappa).